A 505-amino-acid chain; its full sequence is Glycerol kinase (505 aa).

An ADP-binding site is contributed by Thr-14. The ATP site is built by Thr-14, Thr-15, and Ser-16. Residue Thr-14 participates in sn-glycerol 3-phosphate binding. Arg-18 serves as a coordination point for ADP. Sn-glycerol 3-phosphate-binding residues include Arg-84, Glu-85, Tyr-136, and Asp-246. Glycerol-binding residues include Arg-84, Glu-85, Tyr-136, Asp-246, and Gln-247. Residues Thr-268 and Gly-311 each contribute to the ADP site. ATP-binding residues include Thr-268, Gly-311, Gln-315, and Gly-412. Residues Gly-412 and Asn-416 each contribute to the ADP site.

Belongs to the FGGY kinase family.

It carries out the reaction glycerol + ATP = sn-glycerol 3-phosphate + ADP + H(+). It participates in polyol metabolism; glycerol degradation via glycerol kinase pathway; sn-glycerol 3-phosphate from glycerol: step 1/1. Its activity is regulated as follows. Inhibited by fructose 1,6-bisphosphate (FBP). Key enzyme in the regulation of glycerol uptake and metabolism. Catalyzes the phosphorylation of glycerol to yield sn-glycerol 3-phosphate. In Vibrio cholerae serotype O1 (strain ATCC 39315 / El Tor Inaba N16961), this protein is Glycerol kinase.